The sequence spans 294 residues: ADP-ribosyl-[dinitrogen reductase] glycohydrolase (294 aa).

ADP-D-ribose-binding positions include 100 to 102 (NTC), Glu-121, His-158, and Tyr-212. Residues Asp-243, Asp-245, and Thr-246 each contribute to the Mn(2+) site.

Belongs to the ADP-ribosylglycohydrolase family. As to quaternary structure, monomer. The cofactor is Mn(2+).

It is found in the cytoplasm. The enzyme catalyses N(omega)-alpha-(ADP-D-ribosyl)-L-arginyl-[dinitrogen reductase] + H2O = L-arginyl-[dinitrogen reductase] + ADP-D-ribose. Functionally, involved in the regulation of nitrogen fixation activity by the reversible ADP-ribosylation of one subunit of the homodimeric dinitrogenase reductase component of the nitrogenase enzyme complex. The ADP-ribosyltransferase (DraT) transfers the ADP-ribose group from NAD to dinitrogenase reductase. The ADP-ribose group is removed through the action of the ADP-ribosylglycohydrolase (DraG, this entry). The chain is ADP-ribosyl-[dinitrogen reductase] glycohydrolase from Rhodospirillum rubrum.